The chain runs to 440 residues: Collagen alpha-1(XXVI) chain (440 aa).

The signal sequence occupies residues 1–20 (MKLVLLLPWACCCLCGSALA). Positions 52–128 (RRHWCHHTVT…PGFTGSNCEE (77 aa)) constitute an EMI domain. 3 disulfide bridges follow: Cys56/Cys118, Cys83/Cys89, and Cys117/Cys126. Asn70 is a glycosylation site (N-linked (GlcNAc...) asparagine). Asn132 carries N-linked (GlcNAc...) asparagine glycosylation. 2 disordered regions span residues 157-362 (EQPS…EGEG) and 390-440 (LASP…GDRK). Residues 199-267 (GPAGPPGQMG…PGPAGSPGLL (69 aa)) enclose the Collagen-like 1 domain. Pro residues-rich tracts occupy residues 200–215 (PAGP…PAGP), 231–243 (VGPP…PGPR), and 252–261 (PGPPGPPGPA). A compositionally biased stretch (polar residues) spans 269-281 (NTPQGVLYSLQTP). The Collagen-like 2 domain maps to 302 to 334 (GIPGPRGPPGPPGPPGPHGPPGPPGAPGSQGLV). Residues 306–327 (PRGPPGPPGPPGPHGPPGPPGA) show a composition bias toward pro residues. Residues 347–356 (SVKEEEDKAS) show a composition bias toward basic and acidic residues.

Homotrimer or heterotrimer. Hydroxylated on proline residues. Post-translationally, N-glycosylated. As to expression, specifically expressed in the testis and ovary in adult tissues.

It localises to the secreted. Its subcellular location is the extracellular space. The protein localises to the extracellular matrix. The chain is Collagen alpha-1(XXVI) chain (Col26a1) from Mus musculus (Mouse).